We begin with the raw amino-acid sequence, 492 residues long: Ketol-acid reductoisomerase (NADP(+)) (492 aa).

In terms of domain architecture, KARI N-terminal Rossmann spans 14-208 (LDQLGRCRFM…GGHKAGVLES (195 aa)). Residues 45-48 (CGAQ), Arg-68, Arg-76, Ser-78, and 108-110 (DKQ) each bind NADP(+). The active site involves His-132. Gly-158 contributes to the NADP(+) binding site. KARI C-terminal knotted domains lie at 209-344 (SFVA…NAPK) and 345-485 (YDGK…MTDM). Mg(2+)-binding residues include Asp-217, Glu-221, Glu-389, and Glu-393. Residue Ser-414 participates in substrate binding.

The protein belongs to the ketol-acid reductoisomerase family. It depends on Mg(2+) as a cofactor.

It carries out the reaction (2R)-2,3-dihydroxy-3-methylbutanoate + NADP(+) = (2S)-2-acetolactate + NADPH + H(+). It catalyses the reaction (2R,3R)-2,3-dihydroxy-3-methylpentanoate + NADP(+) = (S)-2-ethyl-2-hydroxy-3-oxobutanoate + NADPH + H(+). Its pathway is amino-acid biosynthesis; L-isoleucine biosynthesis; L-isoleucine from 2-oxobutanoate: step 2/4. The protein operates within amino-acid biosynthesis; L-valine biosynthesis; L-valine from pyruvate: step 2/4. Involved in the biosynthesis of branched-chain amino acids (BCAA). Catalyzes an alkyl-migration followed by a ketol-acid reduction of (S)-2-acetolactate (S2AL) to yield (R)-2,3-dihydroxy-isovalerate. In the isomerase reaction, S2AL is rearranged via a Mg-dependent methyl migration to produce 3-hydroxy-3-methyl-2-ketobutyrate (HMKB). In the reductase reaction, this 2-ketoacid undergoes a metal-dependent reduction by NADPH to yield (R)-2,3-dihydroxy-isovalerate. This chain is Ketol-acid reductoisomerase (NADP(+)), found in Haemophilus influenzae (strain PittEE).